Here is a 383-residue protein sequence, read N- to C-terminus: Phospho-N-acetylmuramoyl-pentapeptide-transferase (383 aa).

Helical transmembrane passes span 26 to 46 (TAGAVATALILVILFAPGVIE), 73 to 93 (TMGGIFIVGSILISVLLWAEL), 98 to 118 (IILLTLSLVILSIAGFLDDFL), 131 to 151 (IYKIFFQTFVGIIIGVYLYYF), 182 to 202 (IFLPFASTIYIDLKILYIPFA), 221 to 241 (GLAIGLLIIMSMALAVLSYVS), 258 to 278 (AGEVTVFVGALIGAGLGFLWF), 283 to 305 (AQVFMGDVGSLSLGGVLGIIALF), and 360 to 380 (QVVFRFYIIGIIMALIGIATL).

The protein belongs to the glycosyltransferase 4 family. MraY subfamily. It depends on Mg(2+) as a cofactor.

The protein resides in the cell inner membrane. The catalysed reaction is UDP-N-acetyl-alpha-D-muramoyl-L-alanyl-gamma-D-glutamyl-meso-2,6-diaminopimeloyl-D-alanyl-D-alanine + di-trans,octa-cis-undecaprenyl phosphate = di-trans,octa-cis-undecaprenyl diphospho-N-acetyl-alpha-D-muramoyl-L-alanyl-D-glutamyl-meso-2,6-diaminopimeloyl-D-alanyl-D-alanine + UMP. The protein operates within cell wall biogenesis; peptidoglycan biosynthesis. Catalyzes the initial step of the lipid cycle reactions in the biosynthesis of the cell wall peptidoglycan: transfers peptidoglycan precursor phospho-MurNAc-pentapeptide from UDP-MurNAc-pentapeptide onto the lipid carrier undecaprenyl phosphate, yielding undecaprenyl-pyrophosphoryl-MurNAc-pentapeptide, known as lipid I. The polypeptide is Phospho-N-acetylmuramoyl-pentapeptide-transferase (Brachyspira hyodysenteriae (strain ATCC 49526 / WA1)).